We begin with the raw amino-acid sequence, 101 residues long: ATP-dependent Clp protease adapter protein ClpS (101 aa).

This sequence belongs to the ClpS family. In terms of assembly, binds to the N-terminal domain of the chaperone ClpA.

Its function is as follows. Involved in the modulation of the specificity of the ClpAP-mediated ATP-dependent protein degradation. This Corynebacterium efficiens (strain DSM 44549 / YS-314 / AJ 12310 / JCM 11189 / NBRC 100395) protein is ATP-dependent Clp protease adapter protein ClpS.